We begin with the raw amino-acid sequence, 483 residues long: Scarecrow-like protein 26 (483 aa).

Positions 95-477 (KTDESKGLRL…RRLVSASFWA (383 aa)) constitute a GRAS domain. Positions 102 to 165 (LRLVHLLVAA…SKLLERDSVL (64 aa)) are leucine repeat I (LRI). Positions 184–251 (FELLQNMSPY…PSAQHLRITA (68 aa)) are VHIID. The short motif at 215–219 (IHIVD) is the VHIID element. The leucine repeat II (LRII) stretch occupies residues 267–299 (ETGRRLTAFADSIGQPFSYQHCKLDTNAFSTSS). A PFYRE region spans residues 308–400 (VVINCMLHLP…RVFIGPWVAN (93 aa)). An SAW region spans residues 403 to 477 (TRITANDAEV…RRLVSASFWA (75 aa)).

Belongs to the GRAS family. As to expression, expressed in seedlings, roots, leaves and flowers.

Its subcellular location is the nucleus. In terms of biological role, probable transcription factor involved in plant development. In Arabidopsis thaliana (Mouse-ear cress), this protein is Scarecrow-like protein 26 (SCL26).